The primary structure comprises 228 residues: MRITIILVAPARAENIGAAARAMKTMGFSDLRIVDSQAHLEPATRWVAHGSGDIIDNIKVFPTLAESLHDVDFTVATTARSRAKYHYYATPVELVPLLEEKSSWMSHAALVFGREDSGLTNEELALADVLTGVPMVADYPSLNLGQAVMVYCYQLATLIQQPAKSDATADQHQLQALRERAMTLLTTLAVADDIKLVDWLQQRLGLLEQRDTAMLHRLLHDIEKNITK.

S-adenosyl-L-methionine is bound by residues 77–79, glycine 113, valine 133, and 140–142; these read TTA and PSL.

This sequence belongs to the class IV-like SAM-binding methyltransferase superfamily. RNA methyltransferase TrmH family.

This is an uncharacterized protein from Escherichia coli (strain K12).